The primary structure comprises 119 residues: Large ribosomal subunit protein bL19 (119 aa).

It belongs to the bacterial ribosomal protein bL19 family.

Functionally, this protein is located at the 30S-50S ribosomal subunit interface and may play a role in the structure and function of the aminoacyl-tRNA binding site. In Pseudoalteromonas atlantica (strain T6c / ATCC BAA-1087), this protein is Large ribosomal subunit protein bL19.